Consider the following 741-residue polypeptide: T-box transcription factor TBX3 (741 aa).

Positions 107-220 (LEAKELWDQF…NNISDKHGFT (114 aa)) form a DNA-binding region, T-box; first part. The T-box; second part DNA-binding region spans 241-305 (ILNSMHKYQP…NNPFAKGFRD (65 aa)). Serine 369 carries the post-translational modification Phosphoserine. Residues 369-469 (SEAESDAEAE…EGPVATKVDE (101 aa)) are disordered. Basic and acidic residues-rich tracts occupy residues 377-386 (AESKEEHGPE) and 420-437 (SRAR…DSRH). 7 positions are modified to phosphoserine: serine 432, serine 438, serine 456, serine 705, serine 736, serine 738, and serine 740. The segment covering 438 to 447 (SPATISSSTR) has biased composition (polar residues).

In terms of assembly, interacts with PML. As to expression, in adults, highest levels in lung. Also found in brain, heart, kidney, liver and ovary.

The protein localises to the nucleus. Functionally, transcriptional repressor involved in developmental processes. Binds to the palindromic T site 5'-TTCACACCTAGGTGTGAA-3' DNA sequence, or a half-site, which are present in the regulatory region of several genes. Probably plays a role in limb pattern formation. Required for mammary placode induction, and maintenance of the mammary buds during development. Involved in branching morphogenesis in both developing lungs and adult mammary glands, via negative modulation of target genes; acting redundantly with TBX2. Required, together with TBX2, to maintain cell proliferation in the embryonic lung mesenchyme; perhaps acting downstream of SHH, BMP and TGFbeta signaling. Involved in modulating early inner ear development, acting independently of, and also redundantly with, TBX2 in different subregions of the developing ear. Acts as a negative regulator of PML function in cellular senescence. This Mus musculus (Mouse) protein is T-box transcription factor TBX3 (Tbx3).